Consider the following 365-residue polypeptide: Aminomethyltransferase (365 aa).

The protein belongs to the GcvT family. As to quaternary structure, the glycine cleavage system is composed of four proteins: P, T, L and H.

The enzyme catalyses N(6)-[(R)-S(8)-aminomethyldihydrolipoyl]-L-lysyl-[protein] + (6S)-5,6,7,8-tetrahydrofolate = N(6)-[(R)-dihydrolipoyl]-L-lysyl-[protein] + (6R)-5,10-methylene-5,6,7,8-tetrahydrofolate + NH4(+). Functionally, the glycine cleavage system catalyzes the degradation of glycine. The polypeptide is Aminomethyltransferase (Natranaerobius thermophilus (strain ATCC BAA-1301 / DSM 18059 / JW/NM-WN-LF)).